The primary structure comprises 201 residues: MNILVIKSSVNEKKGSYSSHLSDLFIKFYLEIHPDDQIEVYDLNQFGLANTNLTMKNFEDKTFYQKAESDFWINKLRNADKIVFSTSMTNFNYSATTKNFFDAITVPNKTFLLDKNTGKYTGLLKNIQNVQILTAQGAPLGWYPFGNHSALIKQIFEFLGANVRSDFFVLDGTKVAPNNQKPIADFVAQRQNQIKILAENF.

Residues Ser-9 and 16–18 (SYS) contribute to the FMN site.

It belongs to the azoreductase type 1 family. In terms of assembly, homodimer. Requires FMN as cofactor.

It catalyses the reaction 2 a quinone + NADH + H(+) = 2 a 1,4-benzosemiquinone + NAD(+). The catalysed reaction is N,N-dimethyl-1,4-phenylenediamine + anthranilate + 2 NAD(+) = 2-(4-dimethylaminophenyl)diazenylbenzoate + 2 NADH + 2 H(+). Functionally, quinone reductase that provides resistance to thiol-specific stress caused by electrophilic quinones. Also exhibits azoreductase activity. Catalyzes the reductive cleavage of the azo bond in aromatic azo compounds to the corresponding amines. This Mesomycoplasma hyopneumoniae (strain J / ATCC 25934 / NCTC 10110) (Mycoplasma hyopneumoniae) protein is FMN-dependent NADH:quinone oxidoreductase.